The sequence spans 476 residues: Replication factor C large subunit (476 aa).

G43–T50 provides a ligand contact to ATP. A disordered region spans residues L435–F476.

The protein belongs to the activator 1 small subunits family. RfcL subfamily. As to quaternary structure, heteromultimer composed of small subunits (RfcS) and large subunits (RfcL).

In terms of biological role, part of the RFC clamp loader complex which loads the PCNA sliding clamp onto DNA. This is Replication factor C large subunit from Methanocorpusculum labreanum (strain ATCC 43576 / DSM 4855 / Z).